Consider the following 269-residue polypeptide: Fructose permease IIC component (269 aa).

Positions 1 to 234 constitute a PTS EIIC type-4 domain; sequence MSSLQIILLL…GALGLCLALL (234 aa). Helical transmembrane passes span 2 to 22, 35 to 54, 64 to 86, 90 to 110, 149 to 169, 181 to 201, and 206 to 226; these read SSLQ…ASVL, TLVG…GGTL, VGLA…VITA, IGEG…LTIF, VMIP…AFLG, IGGG…MNIP, and FFYI…GFGA.

Its subcellular location is the cell membrane. Its function is as follows. The phosphoenolpyruvate-dependent sugar phosphotransferase system (PTS), a major carbohydrate active -transport system, catalyzes the phosphorylation of incoming sugar substrates concomitant with their translocation across the cell membrane. This system is involved in fructose transport. In Bacillus subtilis (strain 168), this protein is Fructose permease IIC component (levF).